Consider the following 469-residue polypeptide: IAA-alanine resistance protein 1 (469 aa).

The signal sequence occupies residues 1–28 (MSFSLRKLLVPILVLVLFLDLCVESGFS). Residues 33-58 (ARDDHVHHHGGGCSHSHDHDHDHDHD) are disordered. Positions 47-58 (HSHDHDHDHDHD) are enriched in basic and acidic residues. The next 2 helical transmembrane spans lie at 114-134 (CSLL…IMFV) and 141-161 (WFVD…AFLH). The segment at 170–197 (GHSHSNDHHENHDHHDHSHSDSPSHSHS) is disordered. Over residues 173–193 (HSNDHHENHDHHDHSHSDSPS) the composition is skewed to basic and acidic residues. Residues 201–221 (LSVGLSVLAGIVVFLLVEKLV) traverse the membrane as a helical segment. The interval 228–315 (SSGSNTWGHH…GKSDKPEQVE (88 aa)) is disordered. The span at 235–246 (GHHHHHHHAGSK) shows a compositional bias: basic residues. A compositionally biased stretch (basic and acidic residues) spans 247 to 256 (KLKDEGDHNN). Polar residues predominate over residues 257–279 (LDQQSSSDAIVNSSEKVSGGSTD). The span at 292–315 (ATDKSDSGTEITSDGKSDKPEQVE) shows a compositional bias: basic and acidic residues. A run of 3 helical transmembrane segments spans residues 387–407 (LFFN…VLVW), 415–435 (SLIE…GVLA), and 448–468 (SACH…ISLI).

It belongs to the ZIP transporter (TC 2.A.5) family. KE4/Catsup subfamily.

It localises to the membrane. In terms of biological role, may participate in auxin metabolism or response. Probable transporter. This is IAA-alanine resistance protein 1 (IAR1) from Arabidopsis thaliana (Mouse-ear cress).